The sequence spans 265 residues: Regulator of calcineurin 2 (265 aa).

Serine 104 and serine 110 each carry phosphoserine. Disordered regions lie at residues 127 to 213 (LLSI…DKSA) and 242 to 265 (ENDVNATASNPPKSPSITVNEFFH). Threonine 132 carries the phosphothreonine modification. 2 stretches are compositionally biased toward low complexity: residues 141–161 (SSSLNKGGSSLSPDKSSLESP) and 182–202 (LSRSSSSTSNLSLNRSSQTSL). 8 positions are modified to phosphoserine: serine 152, serine 157, serine 160, serine 183, serine 187, serine 193, serine 201, and serine 255.

Phosphorylation of Ser-152 and Ser-160 is induced 2-fold in response to mating pheromone.

It localises to the cytoplasm. This Saccharomyces cerevisiae (strain ATCC 204508 / S288c) (Baker's yeast) protein is Regulator of calcineurin 2 (RCN2).